A 353-amino-acid chain; its full sequence is Ribosomal RNA small subunit methyltransferase C (353 aa).

This sequence belongs to the methyltransferase superfamily. RsmC family. As to quaternary structure, monomer.

It is found in the cytoplasm. It catalyses the reaction guanosine(1207) in 16S rRNA + S-adenosyl-L-methionine = N(2)-methylguanosine(1207) in 16S rRNA + S-adenosyl-L-homocysteine + H(+). Specifically methylates the guanine in position 1207 of 16S rRNA in the 30S particle. This chain is Ribosomal RNA small subunit methyltransferase C, found in Marinomonas sp. (strain MWYL1).